A 1073-amino-acid chain; its full sequence is Collagen alpha-2(I) chain (1073 aa).

Positions 1–939 (APDPGPGPMG…PGPAGGGYDV (939 aa)) are disordered. Composition is skewed to low complexity over residues 100 to 148 (EPGA…AAGP), 178 to 187 (EPGPNGAVGP), and 194 to 215 (PGNN…AGAP). The span at 217–227 (FPGPRGGPGPQ) shows a compositional bias: pro residues. Positions 229–239 (PQGAAGQRGLA) are enriched in low complexity. Over residues 246-255 (GVKGDGGPKG) the composition is skewed to gly residues. 4 stretches are compositionally biased toward low complexity: residues 296-315 (MPGA…PGDA), 321-348 (SGPA…AGPA), 386-399 (APGP…TGAT), and 411-423 (QGAA…QGLP). Over residues 424 to 433 (GPAGGAGEAG) the composition is skewed to gly residues. Residues 458–468 (NPGAAGASGPQ) show a composition bias toward low complexity. A compositionally biased stretch (gly residues) spans 481–508 (GTDGGKGEPGAAGAAGGPGHQGPGGMPG). Residues 519–530 (KGEKGEAGHRGP) show a composition bias toward basic and acidic residues. Low complexity-rich tracts occupy residues 561 to 575 (SGSF…ARGA) and 584 to 597 (PAGA…PGAD). The segment covering 607 to 616 (GPSGGKGESG) has biased composition (gly residues). 3 stretches are compositionally biased toward low complexity: residues 617–642 (PAGP…TGAR), 653–680 (FPGA…PAGK), and 708–729 (SGEK…SGPL). Positions 745 to 757 (GSPGGAGGVGEPG) are enriched in gly residues. Residues 758-774 (RVGPAGPAGARGNLGLP) are compositionally biased toward low complexity. The span at 811-820 (GESGPGGAAG) shows a compositional bias: gly residues. Positions 821-836 (AVGPAGARGAAGPSGP) are enriched in low complexity. The segment covering 837 to 851 (RGEKGVAGEKGERGL) has biased composition (basic and acidic residues). 2 stretches are compositionally biased toward low complexity: residues 857–876 (LQGM…AGPN) and 906–917 (PGARGPPGYVGP). The segment covering 918 to 932 (AGPPGSPGLPGPPGP) has biased composition (pro residues). Residues 1039–1073 (RTNKPSRLPLLDLAPLDLGGADQEFGLDLGPVCFK) enclose the Fibrillar collagen NC1 domain.

Belongs to the fibrillar collagen family.

It localises to the secreted. It is found in the extracellular space. The protein resides in the extracellular matrix. This is Collagen alpha-2(I) chain from Epinephelus aeneus (White grouper).